The chain runs to 469 residues: 3-isopropylmalate dehydratase large subunit (469 aa).

Residues Cys-347, Cys-407, and Cys-410 each contribute to the [4Fe-4S] cluster site.

This sequence belongs to the aconitase/IPM isomerase family. LeuC type 1 subfamily. In terms of assembly, heterodimer of LeuC and LeuD. It depends on [4Fe-4S] cluster as a cofactor.

It catalyses the reaction (2R,3S)-3-isopropylmalate = (2S)-2-isopropylmalate. It participates in amino-acid biosynthesis; L-leucine biosynthesis; L-leucine from 3-methyl-2-oxobutanoate: step 2/4. In terms of biological role, catalyzes the isomerization between 2-isopropylmalate and 3-isopropylmalate, via the formation of 2-isopropylmaleate. The sequence is that of 3-isopropylmalate dehydratase large subunit from Sorangium cellulosum (strain So ce56) (Polyangium cellulosum (strain So ce56)).